Here is a 146-residue protein sequence, read N- to C-terminus: Hemoglobin subunit beta-1 (146 aa).

One can recognise a Globin domain in the interval 2–146 (VWTNEERSII…VVSALGKQYH (145 aa)). Heme b contacts are provided by histidine 63 and histidine 92.

This sequence belongs to the globin family. As to quaternary structure, hb1 is a heterotetramer of two alpha chains and two beta-1 chains. As to expression, red blood cells.

Functionally, involved in oxygen transport from gills to the various peripheral tissues. The protein is Hemoglobin subunit beta-1 (hbb1) of Pseudaphritis urvillii (Congolli).